The chain runs to 295 residues: MSTEPKRKFGVVVVGVGRAGSVRIRDLKDPHSSAFLNLIGYVSRRELGSLDNVRQISLEDALRSQEVDVAYICTESSSHEDYIRQFLQAGKHVLVEYPMALSFAAAQELWELAAQKGRVLHEEHIELLMEEFEFLKREVAGKELLKGSLRFTASPLEEEKFGFPAFSGISRLTWLVSLFGELSLISATMENRKEDQYMKMTVQLETQNKSPLSWIEEKGPGLKRNRHISIHFKSGSLEEVPNVGVNKNIFLKDQDIFIQKLLGQVSAEDLAAEKKRILHCLELASDIQRLCHRKQ.

A propeptide spanning residues 1–2 (MS) is cleaved from the precursor. NAD(+)-binding positions include 18–19 (RA), 76–79 (SSSH), and tyrosine 97. Serine 154 bears the Phosphoserine mark. Serine 167 contacts NAD(+). At threonine 173 the chain carries Phosphothreonine. A phosphoserine mark is found at serine 177 and serine 229. Residues lysine 247 and lysine 252 each carry the N6-acetyllysine modification. Zn(2+) contacts are provided by histidine 279, cysteine 280, cysteine 291, and histidine 292.

This sequence belongs to the Gfo/Idh/MocA family. Biliverdin reductase subfamily. In terms of assembly, monomer. Requires Zn(2+) as cofactor.

It localises to the cytoplasm. It is found in the cytosol. It catalyses the reaction (4Z,15Z)-bilirubin IXalpha + NAD(+) = biliverdin IXalpha + NADH + H(+). It carries out the reaction (4Z,15Z)-bilirubin IXalpha + NADP(+) = biliverdin IXalpha + NADPH + H(+). It participates in porphyrin-containing compound metabolism; protoheme degradation. Its function is as follows. Reduces the gamma-methene bridge of the open tetrapyrrole, biliverdin IXalpha, to bilirubin with the concomitant oxidation of a NADH or NADPH cofactor. Does not reduce bilirubin IXbeta. Uses the reactants NADH or NADPH depending on the pH; NADH is used at the acidic pH range (6-6.9) and NADPH at the alkaline range (8.5-8.7). NADPH, however, is the probable reactant in biological systems. The chain is Biliverdin reductase A from Mus musculus (Mouse).